A 212-amino-acid polypeptide reads, in one-letter code: Ribosomal RNA small subunit methyltransferase G (212 aa).

S-adenosyl-L-methionine-binding positions include Gly-73, Phe-78, 124 to 125, and Arg-137; that span reads IE.

Belongs to the methyltransferase superfamily. RNA methyltransferase RsmG family.

The protein localises to the cytoplasm. Functionally, specifically methylates the N7 position of a guanine in 16S rRNA. This is Ribosomal RNA small subunit methyltransferase G from Karelsulcia muelleri (strain GWSS) (Sulcia muelleri).